Here is a 316-residue protein sequence, read N- to C-terminus: Acetylglutamate kinase (316 aa).

Residues 65–66 (GG), R87, and N179 contribute to the substrate site.

The protein belongs to the acetylglutamate kinase family. ArgB subfamily.

The protein resides in the cytoplasm. It carries out the reaction N-acetyl-L-glutamate + ATP = N-acetyl-L-glutamyl 5-phosphate + ADP. The protein operates within amino-acid biosynthesis; L-arginine biosynthesis; N(2)-acetyl-L-ornithine from L-glutamate: step 2/4. Functionally, catalyzes the ATP-dependent phosphorylation of N-acetyl-L-glutamate. The sequence is that of Acetylglutamate kinase from Alkaliphilus metalliredigens (strain QYMF).